Consider the following 634-residue polypeptide: Growth hormone receptor (634 aa).

Positions Met-1–Ala-18 are cleaved as a signal peptide. Residues Phe-19–Gln-260 are Extracellular-facing. N-linked (GlcNAc...) asparagine glycosylation occurs at Asn-46. An intrachain disulfide couples Cys-56 to Cys-66. Residue Asn-73 is glycosylated (N-linked (GlcNAc...) asparagine). A disulfide bridge links Cys-97 with Cys-108. Residue Asn-111 is glycosylated (N-linked (GlcNAc...) asparagine). A disulfide bond links Cys-122 and Cys-136. In terms of domain architecture, Fibronectin type-III spans Pro-147 to Met-250. 3 N-linked (GlcNAc...) asparagine glycosylation sites follow: Asn-152, Asn-157, and Asn-196. A WSXWS motif motif is present at residues Tyr-236–Ser-240. A helical membrane pass occupies residues Phe-261–Ser-284. Residues Lys-285–Pro-634 are Cytoplasmic-facing. The required for JAK2 binding stretch occupies residues Lys-290–Ala-375. A Box 1 motif motif is present at residues Ile-293–Lys-301. The UbE motif signature appears at Asp-336 to Asp-345. Residue Ser-337 is modified to Phosphoserine. A disordered region spans residues Lys-451–Leu-471. The span at Thr-460–Leu-471 shows a compositional bias: polar residues. Residues Tyr-483 and Tyr-591 each carry the phosphotyrosine modification.

Belongs to the type I cytokine receptor family. Type 1 subfamily. In terms of assembly, on growth hormone (GH) binding, forms homodimers and binds JAK2 via a box 1-containing domain. Post-translationally, the soluble form (GHBP) is produced by phorbol ester-promoted proteolytic cleavage at the cell surface (shedding) by ADAM17/TACE. Shedding is inhibited by growth hormone (GH) binding to the receptor probably due to a conformational change in GHR rendering the receptor inaccessible to ADAM17. On GH binding, phosphorylated on tyrosine residues in the cytoplasmic domain by JAK2. In terms of processing, ubiquitinated by the ECS(SOCS2) complex following ligand-binding and phosphorylation by JAK2, leading to its degradation by the proteasome. Regulation by the ECS(SOCS2) complex acts as a negative feedback loop of growth hormone receptor signaling. Ubiquitination is not sufficient for GHR internalization.

The protein resides in the cell membrane. Its subcellular location is the secreted. Receptor for pituitary gland growth hormone (GH1) involved in regulating postnatal body growth. On ligand binding, couples to the JAK2/STAT5 pathway. In terms of biological role, the soluble form (GHBP) acts as a reservoir of growth hormone in plasma and may be a modulator/inhibitor of GH signaling. This is Growth hormone receptor (GHR) from Ovis aries (Sheep).